The chain runs to 237 residues: DNA repair protein RecO (237 aa).

Belongs to the RecO family.

Its function is as follows. Involved in DNA repair and RecF pathway recombination. This Flavobacterium johnsoniae (strain ATCC 17061 / DSM 2064 / JCM 8514 / BCRC 14874 / CCUG 350202 / NBRC 14942 / NCIMB 11054 / UW101) (Cytophaga johnsonae) protein is DNA repair protein RecO.